The sequence spans 277 residues: Large ribosomal subunit protein uL2 (277 aa).

Residues 222–277 form a disordered region; sequence GVAMNPVDHPHGGGEGRTSGGRHPVSPWGKPTKGKRTRSNKATDKFIMRTRHQRKK.

It belongs to the universal ribosomal protein uL2 family. Part of the 50S ribosomal subunit. Forms a bridge to the 30S subunit in the 70S ribosome.

Its function is as follows. One of the primary rRNA binding proteins. Required for association of the 30S and 50S subunits to form the 70S ribosome, for tRNA binding and peptide bond formation. It has been suggested to have peptidyltransferase activity; this is somewhat controversial. Makes several contacts with the 16S rRNA in the 70S ribosome. This chain is Large ribosomal subunit protein uL2, found in Bartonella henselae (strain ATCC 49882 / DSM 28221 / CCUG 30454 / Houston 1) (Rochalimaea henselae).